Reading from the N-terminus, the 850-residue chain is DNA polymerase I (850 aa).

The 288-residue stretch at 1–288 (MKLVIFDGNS…SIIKRLGLSE (288 aa)) folds into the 5'-3' exonuclease domain. The tract at residues 470–850 (VDRDALIQYT…KEGLNWYETK (381 aa)) is polymerase.

It belongs to the DNA polymerase type-A family.

It carries out the reaction DNA(n) + a 2'-deoxyribonucleoside 5'-triphosphate = DNA(n+1) + diphosphate. In addition to polymerase activity, this DNA polymerase exhibits 3'-5' and 5'-3' exonuclease activity. The chain is DNA polymerase I (polA) from Caldicellulosiruptor bescii (strain ATCC BAA-1888 / DSM 6725 / KCTC 15123 / Z-1320) (Anaerocellum thermophilum).